The sequence spans 49 residues: Large ribosomal subunit protein bL33 (49 aa).

Belongs to the bacterial ribosomal protein bL33 family.

This chain is Large ribosomal subunit protein bL33, found in Lachnoclostridium phytofermentans (strain ATCC 700394 / DSM 18823 / ISDg) (Clostridium phytofermentans).